Here is a 141-residue protein sequence, read N- to C-terminus: Small ribosomal subunit protein uS8c (141 aa).

This sequence belongs to the universal ribosomal protein uS8 family. Part of the 30S ribosomal subunit.

Its subcellular location is the plastid. It is found in the chloroplast. One of the primary rRNA binding proteins, it binds directly to 16S rRNA central domain where it helps coordinate assembly of the platform of the 30S subunit. The chain is Small ribosomal subunit protein uS8c (rps8) from Pleurastrum terricola (Filamentous green alga).